The following is a 118-amino-acid chain: Co-chaperonin GroES (118 aa).

The protein belongs to the GroES chaperonin family. In terms of assembly, heptamer of 7 subunits arranged in a ring. Interacts with the chaperonin GroEL.

The protein resides in the cytoplasm. Together with the chaperonin GroEL, plays an essential role in assisting protein folding. The GroEL-GroES system forms a nano-cage that allows encapsulation of the non-native substrate proteins and provides a physical environment optimized to promote and accelerate protein folding. GroES binds to the apical surface of the GroEL ring, thereby capping the opening of the GroEL channel. The sequence is that of Co-chaperonin GroES from Helicobacter pylori (strain G27).